A 205-amino-acid chain; its full sequence is Holliday junction branch migration complex subunit RuvA (205 aa).

The tract at residues 1–64 (MIGRLRGVLI…EDAQLLYGFI (64 aa)) is domain I. The segment at 65–143 (TKKERSLFRL…SLMEASVGSE (79 aa)) is domain II. A flexible linker region spans residues 144 to 156 (REFVLQSNYSPAP). The tract at residues 157–205 (TVNSAEEDAISALLSLGYKPPQASKAVSAAYKEGMDSETLIKAALKSML) is domain III.

Belongs to the RuvA family. Homotetramer. Forms an RuvA(8)-RuvB(12)-Holliday junction (HJ) complex. HJ DNA is sandwiched between 2 RuvA tetramers; dsDNA enters through RuvA and exits via RuvB. An RuvB hexamer assembles on each DNA strand where it exits the tetramer. Each RuvB hexamer is contacted by two RuvA subunits (via domain III) on 2 adjacent RuvB subunits; this complex drives branch migration. In the full resolvosome a probable DNA-RuvA(4)-RuvB(12)-RuvC(2) complex forms which resolves the HJ.

Its subcellular location is the cytoplasm. Its function is as follows. The RuvA-RuvB-RuvC complex processes Holliday junction (HJ) DNA during genetic recombination and DNA repair, while the RuvA-RuvB complex plays an important role in the rescue of blocked DNA replication forks via replication fork reversal (RFR). RuvA specifically binds to HJ cruciform DNA, conferring on it an open structure. The RuvB hexamer acts as an ATP-dependent pump, pulling dsDNA into and through the RuvAB complex. HJ branch migration allows RuvC to scan DNA until it finds its consensus sequence, where it cleaves and resolves the cruciform DNA. This Shewanella sp. (strain MR-4) protein is Holliday junction branch migration complex subunit RuvA.